We begin with the raw amino-acid sequence, 381 residues long: Cytochrome b (381 aa).

Helical transmembrane passes span 34 to 54, 78 to 99, 114 to 134, and 179 to 199; these read FGSLLGLCLIIQILTGLFLAM, WLIRNIHANGASLFFICVYLHI, WNIGVILLFLLMATAFVGYVL, and FFAFHFLLPFLILALTVIHLL. Heme b is bound by residues His-84 and His-98. Residues His-183 and His-197 each coordinate heme b. Position 202 (His-202) interacts with a ubiquinone. 4 consecutive transmembrane segments (helical) span residues 227 to 247, 289 to 309, 321 to 341, and 348 to 368; these read YKDLLGFFVMIFFLTTLALFM, LGGVLALLFSIFILMLVPLLH, LTQIFFWLLVANSIILTWIGG, and FITVGQIASISYFSLFLIIMP.

The protein belongs to the cytochrome b family. The cytochrome bc1 complex contains 3 respiratory subunits (MT-CYB, CYC1 and UQCRFS1), 2 core proteins (UQCRC1 and UQCRC2) and probably 6 low-molecular weight proteins. Requires heme b as cofactor.

It localises to the mitochondrion inner membrane. Functionally, component of the ubiquinol-cytochrome c reductase complex (complex III or cytochrome b-c1 complex) that is part of the mitochondrial respiratory chain. The b-c1 complex mediates electron transfer from ubiquinol to cytochrome c. Contributes to the generation of a proton gradient across the mitochondrial membrane that is then used for ATP synthesis. The sequence is that of Cytochrome b (mt-cyb) from Sphyrna lewini (Scalloped hammerhead shark).